A 291-amino-acid polypeptide reads, in one-letter code: MSALQWSPHPASLAERLADLAVDALIDEADLSPKPALVDRRGSGAHTDLHLGLMHSSALSLWPTFKWMADAATQFGVVGQPLREALGRLGREGEATMLRTTSGVNTHRGAIWALGLLVTAAALDAQECAPEAICARAGALARIKDRQVLTQNSHGDQVVRRYGVMGAREQAQQGFPAVRLFALPQLQRSRAAGSGEQNARLDALLAIMTTLDDTCVLHRAGIEGLNAMQQGAQRVLYAGGSVSLAGRRALNALDQHLLALNASPGGAADLLAACLFIDGLEPALGPVSRSA.

The protein belongs to the CitG/MdcB family.

It catalyses the reaction 3'-dephospho-CoA + ATP = 2'-(5''-triphospho-alpha-D-ribosyl)-3'-dephospho-CoA + adenine. In terms of biological role, involved in the formation of 2-(5''-phosphoribosyl)-3'-dephosphocoenzyme-A, the prosthetic group of the acyl-carrier protein of the malonate decarboxylase. In Pseudomonas syringae pv. syringae (strain B728a), this protein is Probable 2-(5''-triphosphoribosyl)-3'-dephosphocoenzyme-A synthase.